We begin with the raw amino-acid sequence, 364 residues long: RNA-binding protein 4 (364 aa).

2 consecutive RRM domains span residues 2-72 and 78-148; these read VKLF…ASKN and TKLH…LSTS. Lys-79 is covalently cross-linked (Glycyl lysine isopeptide (Lys-Gly) (interchain with G-Cter in SUMO2)). Ser-86 is subject to Phosphoserine. Residue Lys-92 forms a Glycyl lysine isopeptide (Lys-Gly) (interchain with G-Cter in SUMO2) linkage. The CCHC-type zinc finger occupies 160–177; the sequence is SGCYRCGKEGHWSKECPI. The tract at residues 196-364 is interaction with TNPO3; the sequence is AVRTPYTMSY…YADRARYSAF (169 aa). Phosphoserine is present on Ser-309.

As to quaternary structure, interacts with TNPO3; the interaction mediates nuclear import of the protein and is disrupted by nuclear Ran bound to GTP. Interacts with EIF4G1 and WT1. Interacts with EIF4A1; the interaction is modulated under stress-induced conditions. Interacts with AGO1. Interacts with AGO2; the interaction occurs under both cell proliferation and differentiation conditions and in an RNA- and phosphorylation-independent manner. Interacts with DDX5; the interaction occurs in an RNA-independent manner. Interacts with RBPMS; the interaction allows cooperative assembly of RNA-bound stable cell-specific alternative splicing regulatory complexes. Post-translationally, phosphorylated. Phosphorylated in vitro on Ser-309 by SRPK1. Phosphorylation on Ser-309 is induced upon cell stress signaling, which alters its subcellular localization and may modulate its activity on IRES-mediated mRNA translation. Phosphorylation on Ser-309 is induced upon cell muscle differentiation.

Its subcellular location is the nucleus. It localises to the nucleolus. The protein localises to the nucleus speckle. It is found in the cytoplasm. The protein resides in the cytoplasmic granule. RNA-binding factor involved in multiple aspects of cellular processes like alternative splicing of pre-mRNA and translation regulation. Modulates alternative 5'-splice site and exon selection. Acts as a muscle cell differentiation-promoting factor. Activates exon skipping of the PTB pre-mRNA during muscle cell differentiation. Antagonizes the activity of the splicing factor PTBP1 to modulate muscle cell-specific exon selection of alpha tropomyosin. Binds to intronic pyrimidine-rich sequence of the TPM1 and MAPT pre-mRNAs. Required for the translational activation of PER1 mRNA in response to circadian clock. Binds directly to the 3'-UTR of the PER1 mRNA. Exerts a suppressive activity on Cap-dependent translation via binding to CU-rich responsive elements within the 3'UTR of mRNAs, a process increased under stress conditions or during myocytes differentiation. Recruits EIF4A1 to stimulate IRES-dependent translation initiation in respons to cellular stress. Associates to internal ribosome entry segment (IRES) in target mRNA species under stress conditions. Plays a role for miRNA-guided RNA cleavage and translation suppression by promoting association of AGO2-containing miRNPs with their cognate target mRNAs. Associates with miRNAs during muscle cell differentiation. Binds preferentially to 5'-CGCGCG[GCA]-3' motif in vitro. The chain is RNA-binding protein 4 (RBM4) from Macaca fascicularis (Crab-eating macaque).